Consider the following 2227-residue polypeptide: Genome polyprotein (2227 aa).

2 short sequence motifs ((L)YPX(n)L motif) span residues 167 to 171 (YPHGL) and 200 to 205 (YPVWEL). The segment at 766-836 (MMSRIAAGDL…PRKMKGLFSQ (71 aa)) is involved in P1-2A pentamerization. The chain crosses the membrane as a helical span at residues 1011–1031 (TVEIINTVLCFVKSGILLYVI). Positions 1043–1070 (IGLLRVMNYADIGCSVISCGKVFSKMLE) are membrane-penetrating ability. Residues 1127–1152 (KKKDILNILKDNQQKIEKAIEEADNF) are a coiled coil. The 163-residue stretch at 1204 to 1366 (HQKLKNLGSI…SFFKNPHNDM (163 aa)) folds into the SF3 helicase domain. ATP is bound at residue 1230–1237 (GKRGGGKS). Residues 1462 to 1482 (WVAVGAAVGILGVLVGGWFVY) form a helical membrane-spanning segment. Tyr1499 carries the post-translational modification O-(5'-phospho-RNA)-tyrosine. The 215-residue stretch at 1514–1728 (DPVESQSTLE…VAKLVTQEMF (215 aa)) folds into the Peptidase C3 domain. Catalysis depends on for protease 3C activity residues His1563, Asp1603, and Cys1691. The RdRp catalytic domain maps to 1976–2097 (DVGLDLDFSA…VFSRDVQIDN (122 aa)).

This sequence belongs to the picornaviridae polyprotein family. Homodimer. Homomultimer; probably interacts with membranes in a multimeric form. Seems to assemble into amyloid-like fibers. In terms of assembly, homodimer. Monomer. Interacts with protein 3CD. As to quaternary structure, interacts with host ACBD3. Interacts with protein 3AB. In terms of assembly, interacts with human MAVS. As to quaternary structure, homodimer; disulfide-linked. Homopentamer. Homooligomer. In terms of assembly, interacts with capsid protein VP2. Interacts with capsid protein VP3. As to quaternary structure, interacts with capsid protein VP1. Interacts with capsid protein VP3. Interacts with capsid protein VP1. Interacts with capsid protein VP2. Post-translationally, specific enzymatic cleavages by viral protease in vivo yield a variety of precursors and mature proteins. Polyprotein processing intermediates are produced, such as P1-2A which is a functional precursor of the structural proteins, VP0 which is a VP4-VP2 precursor, VP1-2A precursor, 3ABC precursor which is a stable and catalytically active precursor of 3A, 3B and 3C proteins, 3AB and 3CD precursors. The assembly signal 2A is removed from VP1-2A by a host protease, possibly host Cathepsin L. This cleavage occurs over a region of 3 amino-acids probably generating VP1 proteins with heterogeneous C-termini. In terms of processing, during virion maturation, immature virions are rendered infectious following cleavage of VP0 into VP4 and VP2. This maturation seems to be an autocatalytic event triggered by the presence of RNA in the capsid and is followed by a conformational change of the particle. The assembly signal 2A is removed from VP1-2A by a host protease, possibly host Cathepsin L in naked virions. This cleavage does not occur in enveloped virions. This cleavage occurs over a region of 3 amino-acids probably generating VP1 proteins with heterogeneous C-termini. Post-translationally, VPg is uridylylated prior to priming replication into VPg-pUpU. In terms of processing, unlike other picornaviruses, does not seem to be myristoylated.

It localises to the virion. It is found in the host endosome. Its subcellular location is the host multivesicular body. The protein localises to the host membrane. The protein resides in the host mitochondrion outer membrane. It localises to the host cytoplasm. It is found in the host cytoplasmic vesicle membrane. The enzyme catalyses RNA(n) + a ribonucleoside 5'-triphosphate = RNA(n+1) + diphosphate. The catalysed reaction is a ribonucleoside 5'-triphosphate + H2O = a ribonucleoside 5'-diphosphate + phosphate + H(+). It carries out the reaction Selective cleavage of Gln-|-Gly bond in the poliovirus polyprotein. In other picornavirus reactions Glu may be substituted for Gln, and Ser or Thr for Gly.. Its function is as follows. Capsid proteins VP1, VP2, and VP3 form a closed capsid enclosing the viral positive strand RNA genome. All these proteins contain a beta-sheet structure called beta-barrel jelly roll. Together they form an icosahedral capsid (T=3) composed of 60 copies of each VP1, VP2, and VP3, with a diameter of approximately 300 Angstroms. VP1 is situated at the 12 fivefold axes, whereas VP2 and VP3 are located at the quasi-sixfold axes. The naked capsid interacts with the host receptor HAVCR1 to provide virion attachment to and probably entry into the target cell. Functionally, VP0 precursor is a component of the immature procapsids. In terms of biological role, plays a role in the assembly of the 12 pentamers into an icosahedral structure. Has not been detected in mature virions, supposedly owing to its small size. Precursor component of immature procapsids that corresponds to an extended form of the structural protein VP1. After maturation, possibly by the host Cathepsin L, the assembly signal 2A is cleaved to give rise to the mature VP1 protein. Its function is as follows. Functions as a viroporin. Affects membrane integrity and causes an increase in membrane permeability. Involved in host intracellular membrane rearrangements probably to give rise to the viral factories. Does not disrupt calcium homeostasis or glycoprotein trafficking. Antagonizes the innate immune response of the host by suppressing IFN-beta synthesis, which it achieves by interfering with the RIG-I/IFIH1 pathway. Functionally, affects membrane integrity and causes an increase in membrane permeability. In terms of biological role, associates with and induces structural rearrangements of intracellular membranes. Displays RNA-binding activity. The precursor 3ABC is targeted to the mitochondrial membrane where protease 3C activity cleaves and inhibits the host antiviral protein MAVS, thereby disrupting activation of IRF3 through the IFIH1/MDA5 pathway. In vivo, the protease activity of 3ABC precursor is more efficient in cleaving the 2BC precursor than that of protein 3C. The 3ABC precursor may therefore play a role in the proteolytic processing of the polyprotein. Possible viroporin. Its function is as follows. Interacts with the 3CD precursor and with RNA structures found at both the 5'- and 3'-termini of the viral genome. Since the 3AB precursor contains the hydrophobic domain 3A, it probably anchors the whole viral replicase complex to intracellular membranes on which viral RNA synthesis occurs. Functionally, may serve as membrane anchor to the 3AB and 3ABC precursors via its hydrophobic domain. May interact with RNA. In terms of biological role, acts as a primer for viral RNA replication and remains covalently bound to viral genomic RNA. VPg is uridylylated prior to priming replication into VPg-pUpU. The VPg-pUpU is then used as primer on the genomic RNA poly(A) by the RNA-dependent RNA polymerase to replicate the viral genome. Cysteine protease that generates mature viral proteins from the precursor polyprotein. In addition to its proteolytic activity, it binds to viral RNA, and thus influences viral genome replication. RNA and substrate bind cooperatively to the protease. Cleaves IKBKG/NEMO to impair innate immune signaling. Cleaves host PABPC1 which may participate in the switch of viral translation to RNA synthesis. Its function is as follows. Interacts with the 3AB precursor and with RNA structures found at both the 5'- and 3'-termini of the viral genome. Disrupts TLR3 signaling by degrading the host adapter protein TICAM1/TRIF. Functionally, RNA-directed RNA polymerase 3D-POL replicates genomic and antigenomic RNA by recognizing replications specific signals. In Cercopithecus hamlyni (Owl-faced monkey), this protein is Genome polyprotein.